The chain runs to 365 residues: Chorismate synthase (365 aa).

NADP(+) is bound at residue arginine 46. FMN-binding positions include 123–125 (RSS), 241–242 (NG), glycine 281, 296–300 (KPTPS), and arginine 322.

This sequence belongs to the chorismate synthase family. Homotetramer. FMNH2 is required as a cofactor.

The catalysed reaction is 5-O-(1-carboxyvinyl)-3-phosphoshikimate = chorismate + phosphate. Its pathway is metabolic intermediate biosynthesis; chorismate biosynthesis; chorismate from D-erythrose 4-phosphate and phosphoenolpyruvate: step 7/7. Functionally, catalyzes the anti-1,4-elimination of the C-3 phosphate and the C-6 proR hydrogen from 5-enolpyruvylshikimate-3-phosphate (EPSP) to yield chorismate, which is the branch point compound that serves as the starting substrate for the three terminal pathways of aromatic amino acid biosynthesis. This reaction introduces a second double bond into the aromatic ring system. The sequence is that of Chorismate synthase from Helicobacter pylori (strain ATCC 700392 / 26695) (Campylobacter pylori).